The chain runs to 372 residues: Queuine tRNA-ribosyltransferase (372 aa).

The Proton acceptor role is filled by Asp90. Residues 90–94, Asp144, Gln193, and Gly220 each bind substrate; that span reads DSGGF. The tract at residues 251–257 is RNA binding; it reads GVGTPED. The Nucleophile role is filled by Asp270. An RNA binding; important for wobble base 34 recognition region spans residues 275–279; it reads TRNAR. 4 residues coordinate Zn(2+): Cys308, Cys310, Cys313, and His339.

The protein belongs to the queuine tRNA-ribosyltransferase family. As to quaternary structure, homodimer. Within each dimer, one monomer is responsible for RNA recognition and catalysis, while the other monomer binds to the replacement base PreQ1. Zn(2+) serves as cofactor.

It carries out the reaction 7-aminomethyl-7-carbaguanine + guanosine(34) in tRNA = 7-aminomethyl-7-carbaguanosine(34) in tRNA + guanine. The protein operates within tRNA modification; tRNA-queuosine biosynthesis. Catalyzes the base-exchange of a guanine (G) residue with the queuine precursor 7-aminomethyl-7-deazaguanine (PreQ1) at position 34 (anticodon wobble position) in tRNAs with GU(N) anticodons (tRNA-Asp, -Asn, -His and -Tyr). Catalysis occurs through a double-displacement mechanism. The nucleophile active site attacks the C1' of nucleotide 34 to detach the guanine base from the RNA, forming a covalent enzyme-RNA intermediate. The proton acceptor active site deprotonates the incoming PreQ1, allowing a nucleophilic attack on the C1' of the ribose to form the product. After dissociation, two additional enzymatic reactions on the tRNA convert PreQ1 to queuine (Q), resulting in the hypermodified nucleoside queuosine (7-(((4,5-cis-dihydroxy-2-cyclopenten-1-yl)amino)methyl)-7-deazaguanosine). This Campylobacter hominis (strain ATCC BAA-381 / DSM 21671 / CCUG 45161 / LMG 19568 / NCTC 13146 / CH001A) protein is Queuine tRNA-ribosyltransferase.